The primary structure comprises 404 residues: Formate-dependent phosphoribosylglycinamide formyltransferase (404 aa).

N(1)-(5-phospho-beta-D-ribosyl)glycinamide contacts are provided by residues Glu-25–Leu-26 and Glu-85. ATP is bound by residues Arg-118, Lys-159, Ser-164–Gln-169, Glu-199–Ile-202, and Glu-207. In terms of domain architecture, ATP-grasp spans Arg-123 to Leu-318. 2 residues coordinate Mg(2+): Glu-277 and Glu-289. N(1)-(5-phospho-beta-D-ribosyl)glycinamide contacts are provided by residues Asp-296, Lys-365, and Arg-372–Arg-373.

It belongs to the PurK/PurT family. Homodimer.

It catalyses the reaction N(1)-(5-phospho-beta-D-ribosyl)glycinamide + formate + ATP = N(2)-formyl-N(1)-(5-phospho-beta-D-ribosyl)glycinamide + ADP + phosphate + H(+). Its pathway is purine metabolism; IMP biosynthesis via de novo pathway; N(2)-formyl-N(1)-(5-phospho-D-ribosyl)glycinamide from N(1)-(5-phospho-D-ribosyl)glycinamide (formate route): step 1/1. Involved in the de novo purine biosynthesis. Catalyzes the transfer of formate to 5-phospho-ribosyl-glycinamide (GAR), producing 5-phospho-ribosyl-N-formylglycinamide (FGAR). Formate is provided by PurU via hydrolysis of 10-formyl-tetrahydrofolate. This chain is Formate-dependent phosphoribosylglycinamide formyltransferase, found in Burkholderia pseudomallei (strain 668).